We begin with the raw amino-acid sequence, 414 residues long: 3-oxoacyl-[acyl-carrier-protein] synthase 2 (414 aa).

Positions 4–411 constitute a Ketosynthase family 3 (KS3) domain; the sequence is NIRVVITGMG…GHNAVLVFKK (408 aa). Active-site for beta-ketoacyl synthase activity residues include cysteine 165, histidine 304, and histidine 341.

This sequence belongs to the thiolase-like superfamily. Beta-ketoacyl-ACP synthases family.

It carries out the reaction a fatty acyl-[ACP] + malonyl-[ACP] + H(+) = a 3-oxoacyl-[ACP] + holo-[ACP] + CO2. The catalysed reaction is (9Z)-hexadecenoyl-[ACP] + malonyl-[ACP] + H(+) = 3-oxo-(11Z)-octadecenoyl-[ACP] + holo-[ACP] + CO2. Its pathway is lipid metabolism; fatty acid biosynthesis. Involved in the type II fatty acid elongation cycle. Catalyzes the elongation of a wide range of acyl-ACP by the addition of two carbons from malonyl-ACP to an acyl acceptor. Can efficiently catalyze the conversion of palmitoleoyl-ACP (cis-hexadec-9-enoyl-ACP) to cis-vaccenoyl-ACP (cis-octadec-11-enoyl-ACP), an essential step in the thermal regulation of fatty acid composition. In Staphylococcus aureus (strain MRSA252), this protein is 3-oxoacyl-[acyl-carrier-protein] synthase 2 (fabF).